Reading from the N-terminus, the 463-residue chain is Nucleobindin-1 (463 aa).

A signal peptide spans 1-26 (MPPSGPQGTLLLLPLLLLLLLRAVLA). Phosphoserine is present on Ser86. Thr148 carries the phosphothreonine modification. A coiled-coil region spans residues 150 to 218 (EARDLELLIQ…QQRRHREHPK (69 aa)). The DNA-binding element occupies 172-218 (HHEEFKRYEMLKEHERRRYLESLGEEQRKEAERRLEEQQRRHREHPK). A compositionally biased stretch (basic and acidic residues) spans 193-210 (SLGEEQRKEAERRLEEQQ). The interval 193–221 (SLGEEQRKEAERRLEEQQRRHREHPKVNV) is disordered. The binds to GNAI2 and GNAI3 stretch occupies residues 228-321 (LKEVWEELDG…VTLGEFLAST (94 aa)). EF-hand domains lie at 240 to 275 (PNRF…ELEK) and 292 to 327 (ERLR…KEFG). Ca(2+) contacts are provided by Asp253, Asn255, Asp257, Glu264, Asp305, Asn307, Asp309, and Glu316. The GBA signature appears at 303–333 (NVDTNQDRLVTLGEFLASTQRKEFGDTGEGW). Positions 341–409 (AYTEEELRRF…KQQQQQQQQQ (69 aa)) form a coiled coil. The disordered stretch occupies residues 368–463 (LSQETEALGR…LPEVEVPQHL (96 aa)). Phosphoserine is present on Ser369. Basic and acidic residues predominate over residues 439–463 (DQKEVDTSEKKLLERLPEVEVPQHL).

The protein belongs to the nucleobindin family. Interacts (via GBA motif) with guanine nucleotide-binding protein G(i) alpha subunits GNAI1, GNAI2 and GNAI3 with higher affinity for GNAI1 and GNAI3 than for GNAI2. Preferentially interacts with inactive rather than active GNAI3. Interaction with GNAI3 is inhibited when NUCB1 binds calcium, probably due to a conformational change which renders the GBA motif inaccessible.

The protein resides in the golgi apparatus. The protein localises to the cis-Golgi network membrane. It is found in the cytoplasm. It localises to the secreted. In terms of biological role, major calcium-binding protein of the Golgi which may have a role in calcium homeostasis. Acts as a non-receptor guanine nucleotide exchange factor which binds to and activates alpha subunits of guanine nucleotide-binding proteins (G proteins). This is Nucleobindin-1 (NUCB1) from Pongo abelii (Sumatran orangutan).